Consider the following 195-residue polypeptide: Interferon tau (195 aa).

Residues 1-23 (MAFVLSLLMALVLASYSPGGSLG) form the signal peptide. Cystine bridges form between cysteine 24–cysteine 122 and cysteine 52–cysteine 162.

It belongs to the alpha/beta interferon family. IFN-alphaII subfamily. In terms of tissue distribution, constitutively and exclusively expressed in the mononuclear cells of the extraembryonic trophectoderm.

Its subcellular location is the secreted. In terms of biological role, paracrine hormone primarily responsible for maternal recognition of pregnancy. Interacts with endometrial receptors, probably type I interferon receptors, and blocks estrogen receptor expression, preventing the estrogen-induced increase in oxytocin receptor expression in the endometrium. This results in the suppression of the pulsatile endometrial release of the luteolytic hormone prostaglandin F2-alpha, hindering the regression of the corpus luteum (luteolysis) and therefore a return to ovarian cyclicity. This, and a possible direct effect of IFN-tau on prostaglandin synthesis, leads in turn to continued ovarian progesterone secretion, which stimulates the secretion by the endometrium of the nutrients required for the growth of the conceptus. In summary, displays particularly high antiviral and antiproliferative potency concurrently with particular weak cytotoxicity, high antiluteolytic activity and immunomodulatory properties. In contrast with other IFNs, IFN-tau is not virally inducible. This chain is Interferon tau (IFNT), found in Cervus elaphus (Red deer).